A 1912-amino-acid polypeptide reads, in one-letter code: Receptor-type tyrosine-protein phosphatase delta (1912 aa).

The signal sequence occupies residues 1–20; it reads MVPVARPLSLLLTFFLCACA. Residues 21–1266 lie on the Extracellular side of the membrane; the sequence is ETPPRFTRTP…PQPITDEEEG (1246 aa). Ig-like C2-type domains are found at residues 24–114 and 126–224; these read PRFT…TRLT and PTID…ANLY. 2 disulfides stabilise this stretch: cysteine 45/cysteine 98 and cysteine 147/cysteine 207. The interval 181-189 is mini-exon peptide A9; sufficient for interaction with IL1RAPL1; it reads ESIGGTPIR. Residues 227–230 form a mini-exon peptide B; required for interaction with SLITRK2 and in the function in pre-synaptic differentiation; Acts as an adjustable linker to control relative positions and orientations of the PTPRD second and third immunoglobilin domains for their simultaneous interactions with the first immunoglobilin domain of IL1RAPL1 and IL1RAP; Modulates affinity for IL1RAPL1 and IL1RAP region; the sequence is ELRE. The 83-residue stretch at 236 to 318 folds into the Ig-like C2-type 3 domain; it reads PRFSIPPTNH…GVIEAIAQIT (83 aa). N-linked (GlcNAc...) asparagine glycans are attached at residues asparagine 254 and asparagine 299. Residues cysteine 257 and cysteine 302 are joined by a disulfide bond. 8 consecutive Fibronectin type-III domains span residues 325-415, 420-516, 518-607, 612-709, 714-822, 823-916, 921-1016, and 1020-1106; these read PPGT…TSEQ, APRD…TGVP, QPLN…TMQS, PPQD…TDED, PPRK…TTGA, VPGK…VPEE, FPQN…TLPV, and FAKN…TAPD. 2 N-linked (GlcNAc...) asparagine glycosylation sites follow: asparagine 724 and asparagine 832. The helical transmembrane segment at 1267 to 1287 threads the bilayer; sequence LIWVVGPVLAVVFIICIVIAI. Residues 1288-1912 are Cytoplasmic-facing; it reads LLYKRKRAES…YLGSFDHYAT (625 aa). The interval 1298–1319 is disordered; the sequence is ESRKSSLPNSKEVPSHHPTDPV. The segment covering 1310-1319 has biased composition (basic and acidic residues); the sequence is VPSHHPTDPV. 2 consecutive Tyrosine-protein phosphatase domains span residues 1357–1612 and 1644–1903; these read FSQE…LLEA and MELE…ALEY. Substrate-binding positions include aspartate 1521, 1553-1559, and glutamine 1597; that span reads CSAGVGR. The active-site Phosphocysteine intermediate is cysteine 1553. Cysteine 1844 functions as the Phosphocysteine intermediate in the catalytic mechanism.

It belongs to the protein-tyrosine phosphatase family. Receptor class 2A subfamily. As to quaternary structure, interacts with PPFIA1, PPFIA2 and PPFIA3. Interacts (via extracellular domain) with SLITRK4 (via LRR 1 and 2 repeats). Interacts with SLITRK2; induces presynaptic differentiation. Interacts (via the second immunoglobilin domain) with IL1RAPL1 (via the first immunoglobilin domain); induces pre- and postsynaptic differentiation of neurons and synapse formation. Isoform G, isoform H, isoform I, isoform J, and isoform K do not interact with IL1RAPL1. Interacts (via the third immunoglobilin domain) with IL1RAP (via the first immunoglobilin domain); induces pre- and postsynaptic differentiation of neurons. In terms of processing, a cleavage occurs, separating the extracellular domain from the transmembrane segment. This process called 'ectodomain shedding' is thought to be involved in receptor desensitization, signal transduction and/or membrane localization. In terms of tissue distribution, brain, kidney, heart, and some B-cell lines.

It is found in the membrane. It carries out the reaction O-phospho-L-tyrosyl-[protein] + H2O = L-tyrosyl-[protein] + phosphate. In terms of biological role, can bidirectionally induce pre- and post-synaptic differentiation of neurons by mediating interaction with IL1RAP and IL1RAPL1 trans-synaptically. Involved in pre-synaptic differentiation through interaction with SLITRK2. The sequence is that of Receptor-type tyrosine-protein phosphatase delta (Ptprd) from Mus musculus (Mouse).